Consider the following 440-residue polypeptide: Transposon Ty1-DR3 Gag polyprotein (440 aa).

Composition is skewed to polar residues over residues 1–10, 48–60, and 127–152; these read MESQQLSNYP, TKANSQQTTTPAS, and QSQFPQYPSSVGTPLSTPSPESGNTF. Disordered regions lie at residues 1-93, 126-173, and 352-440; these read MESQ…MMTQ, PQSQ…RPPP, and GSRN…PETY. Residues 153 to 165 show a composition bias toward low complexity; it reads TDSSSADSDMTST. The tract at residues 299 to 401 is RNA-binding; it reads NNGIHINNKV…NSKSKTARAH (103 aa). Over residues 402–428 the composition is skewed to polar residues; that stretch reads NVSTSINSPSTDNDSISKSTTEPIQLN. Residue Ser416 is modified to Phosphoserine. Residues 429 to 440 are compositionally biased toward basic and acidic residues; sequence NKHDLHLRPETY.

As to quaternary structure, homotrimer.

Its subcellular location is the cytoplasm. In terms of biological role, capsid protein (CA) is the structural component of the virus-like particle (VLP), forming the shell that encapsulates the retrotransposons dimeric RNA genome. The particles are assembled from trimer-clustered units and there are holes in the capsid shells that allow for the diffusion of macromolecules. CA also has nucleocapsid-like chaperone activity, promoting primer tRNA(i)-Met annealing to the multipartite primer-binding site (PBS), dimerization of Ty1 RNA and initiation of reverse transcription. The polypeptide is Transposon Ty1-DR3 Gag polyprotein (TY1A-DR3) (Saccharomyces cerevisiae (strain ATCC 204508 / S288c) (Baker's yeast)).